The chain runs to 144 residues: Probable calcium-binding protein CML31 (144 aa).

4 consecutive EF-hand domains span residues 1–31 (MAEI…FSPQ), 32–67 (ITSE…NGGG), 72–107 (EEEV…LGEK), and 108–143 (HTME…NKES). Residues Asp45, Asp47, Asp49, Gln51, Glu56, Asp85, Asp87, Asp89, Lys91, Glu96, Asp121, Asp123, Asp125, and Glu132 each contribute to the Ca(2+) site.

Potential calcium sensor. The polypeptide is Probable calcium-binding protein CML31 (CML31) (Arabidopsis thaliana (Mouse-ear cress)).